Reading from the N-terminus, the 313-residue chain is Ribosomal RNA small subunit methyltransferase H (313 aa).

S-adenosyl-L-methionine contacts are provided by residues 35 to 37 (GGH), D55, F79, D100, and Q107.

Belongs to the methyltransferase superfamily. RsmH family.

It localises to the cytoplasm. The catalysed reaction is cytidine(1402) in 16S rRNA + S-adenosyl-L-methionine = N(4)-methylcytidine(1402) in 16S rRNA + S-adenosyl-L-homocysteine + H(+). Functionally, specifically methylates the N4 position of cytidine in position 1402 (C1402) of 16S rRNA. The sequence is that of Ribosomal RNA small subunit methyltransferase H from Burkholderia pseudomallei (strain K96243).